A 520-amino-acid chain; its full sequence is Putative lipase ATG15 (520 aa).

Topologically, residues 1–14 are cytoplasmic; it reads MLHKSPSRKRFASP. A helical; Signal-anchor for type II membrane protein membrane pass occupies residues 15 to 35; sequence LHLGCILTLTVLCLIAYYFAL. The Lumenal portion of the chain corresponds to 36–520; it reads PDYLSVGKSS…WLGFCTKYEL (485 aa). N-linked (GlcNAc...) asparagine glycosylation is found at asparagine 173, asparagine 202, and asparagine 208. Serine 332 acts as the Charge relay system in catalysis.

It belongs to the AB hydrolase superfamily. Lipase family. In terms of assembly, binds to both phosphatidylinositol (PI) and phosphatidylinositol 3,5-bisphosphate (PIP2).

The protein localises to the endosome. Its subcellular location is the multivesicular body membrane. The protein resides in the prevacuolar compartment membrane. It catalyses the reaction a triacylglycerol + H2O = a diacylglycerol + a fatty acid + H(+). In terms of biological role, lipase which is essential for lysis of subvacuolar cytoplasm to vacuole targeted bodies and intravacuolar autophagic bodies. Involved in the lysis of intravacuolar multivesicular body (MVB) vesicles. The intravacuolar membrane disintegration by ATG15 is critical to life span extension. The protein is Putative lipase ATG15 (ATG15) of Saccharomyces cerevisiae (strain YJM789) (Baker's yeast).